A 349-amino-acid chain; its full sequence is Protein RecA (349 aa).

65–72 contacts ATP; that stretch reads GPESSGKT.

This sequence belongs to the RecA family.

Its subcellular location is the cytoplasm. Functionally, can catalyze the hydrolysis of ATP in the presence of single-stranded DNA, the ATP-dependent uptake of single-stranded DNA by duplex DNA, and the ATP-dependent hybridization of homologous single-stranded DNAs. It interacts with LexA causing its activation and leading to its autocatalytic cleavage. The chain is Protein RecA from Azotobacter vinelandii (strain DJ / ATCC BAA-1303).